A 374-amino-acid chain; its full sequence is Aminomethyltransferase (374 aa).

Belongs to the GcvT family. As to quaternary structure, the glycine cleavage system is composed of four proteins: P, T, L and H.

It catalyses the reaction N(6)-[(R)-S(8)-aminomethyldihydrolipoyl]-L-lysyl-[protein] + (6S)-5,6,7,8-tetrahydrofolate = N(6)-[(R)-dihydrolipoyl]-L-lysyl-[protein] + (6R)-5,10-methylene-5,6,7,8-tetrahydrofolate + NH4(+). The glycine cleavage system catalyzes the degradation of glycine. In Edwardsiella ictaluri (strain 93-146), this protein is Aminomethyltransferase.